A 508-amino-acid chain; its full sequence is Cytochrome P450 monooxygenase dmxR5 (508 aa).

The chain crosses the membrane as a helical span at residues 24–44 (LTLGLGAILVVLMSFLAFLSY). N-linked (GlcNAc...) asparagine glycans are attached at residues asparagine 387 and asparagine 405. A heme-binding site is contributed by cysteine 451. An N-linked (GlcNAc...) asparagine glycan is attached at asparagine 462. The segment at 481–508 (EHKKSTQESGHGVPLPSKLSKFSPREEN) is disordered.

The protein belongs to the cytochrome P450 family. Requires heme as cofactor.

It localises to the membrane. Its pathway is secondary metabolite biosynthesis. Functionally, cytochrome P450 monooxygenase; part of the gene cluster that mediates the biosynthesis of the dimeric xanthones cryptosporioptides. The pathway begins with the synthesis of atrochrysone thioester by the polyketide synthase dmx-nrPKS. The atrochrysone carboxyl ACP thioesterase dmxR1 then breaks the thioester bond and releases the atrochrysone carboxylic acid from dmx-nrPKS. Atrochrysone carboxylic acid is decarboxylated by the decarboxylase dmxR15, and oxidized by the anthrone oxygenase dmxR16 to yield emodin. Emodin is then reduced to emodin hydroquinone by the oxidoreductase dmxR7. A-ring reduction by the short chain dehydrogenase dmxR18, dehydration by the scytalone dehydratase-like protein dmxR17 and probable spontaneous re-oxidation, results in overall deoxygenation to chrysophanol. Baeyer-Villiger oxidation by the Baeyer-Villiger monooxygenase (BVMO) dmxR6 then yields monodictylactone in equilibrium with monodictyphenone. In the case of the cryptosporioptides biosynthesis, monodictylactone is reduced at C-12 to an alcohol (by the short chain dehydrogenases dmxR12 or dmxR8) and hydroxylated at C-5 by dmxR9, yielding the electron-rich aromatic which could eliminate H(2)O to form the ortho-quinonemethide, followed by tautomerisation to paraquinone and complete the formal reduction to produce the 10-methylgroup. Conjugate addition of C-4a-OH to the resulting paraquinone by the monooxygenase dmxR10 then gives cyclohexadienone, which is then reduced at C-5 by the short chain dehydrogenase dmxR3 to give the dihydroxanthone. The 6,7-epoxide in the cryptosporioptides could be introduced by the cytochrome P450 monooxygenase dmxL3. The highly reducing PKS dmxL2 manufactures butyrate, which is further carboxylated by dmxL1 to form ethylmalonate. It is not yet clear whether the carboxylation occurs while the butyrate is attached to the ACP of dmxL2, but this unusual fungal metabolite could then be esterified to O-5 by the O-acetyltransferase dmxR13. Finally, dimerization performed by dmxR5 gives the observed dimers cryptosporioptides A, B and C as the final products of the pathway. The chain is Cytochrome P450 monooxygenase dmxR5 from Cryptosporiopsis sp. (strain 8999).